The following is a 608-amino-acid chain: Serine/arginine repetitive matrix protein 4 (608 aa).

2 disordered regions span residues 34–246 (ASIT…PLPR) and 261–608 (SAAD…STRR). Over residues 78–100 (GREKACRELDPARAHSASQDRDP) the composition is skewed to basic and acidic residues. Basic residues-rich tracts occupy residues 107–123 (RGKK…RRRS) and 131–187 (VKKK…HRCP). A compositionally biased stretch (low complexity) spans 188–200 (SRSQSSELRSPSC). A compositionally biased stretch (basic and acidic residues) spans 201-213 (ESRHRGRSPEEGR). Positions 214 to 228 (KSRRTHSRRCSKNHC) are enriched in basic residues. Residues 289 to 299 (TSSPPSTQTSS) show a composition bias toward low complexity. Polar residues predominate over residues 322 to 339 (CGNTSDSGNSFTTSSPQN). Composition is skewed to low complexity over residues 389–420 (RSSS…SRST) and 428–459 (SRSP…SRYS). A compositionally biased stretch (basic and acidic residues) spans 460–477 (PSRERDLKYGEKEPQPRE). Over residues 478-494 (RARRRRRSYSPMRKRRR) the composition is skewed to basic residues. Basic and acidic residues predominate over residues 495–504 (DSPSHLEARR). Over residues 518–555 (PSPSSSSSLSSASSWYSSSSSSSSSSSRSPSRSYSRSR) the composition is skewed to low complexity. Residues 556 to 573 (SPSRSHSSRSQTRSRTRT) show a composition bias toward basic residues. The segment covering 574-608 (SRSSSSRSLSLGSRSRSRNRSLSYSSAESYASTRR) has biased composition (low complexity).

This sequence belongs to the nSR100 family. In terms of processing, phosphorylated. Specifically expressed in neuronal cells (at protein level). Expressed in adult nervous system and sensory organ tissues.

The protein localises to the nucleus. Its function is as follows. Splicing factor specifically required for neural cell differentiation. Acts in conjunction with nPTB/PTBP2 by binding directly to its regulated target transcripts and promotes neural-specific exon inclusion in many genes that function in neural cell differentiation. Required to promote the inclusion of neural-specific exon 10 in nPTB/PTBP2, leading to increased expression of neural-specific nPTB/PTBP2. Also promotes the inclusion of exon 16 in DAAM1 in neuron extracts. Promotes alternative splicing of REST transcripts to produce REST isoform 2 (REST4) with greatly reduced repressive activity, thereby activating expression of REST targets in neural cells. Plays an important role during embryonic development as well as in the proper functioning of the adult nervous system. Regulates alternative splicing events in genes with important neuronal functions. The chain is Serine/arginine repetitive matrix protein 4 (Srrm4) from Mus musculus (Mouse).